We begin with the raw amino-acid sequence, 914 residues long: Transcription factor AZF1 (914 aa).

Disordered stretches follow at residues 1 to 63 (MPPP…ESIS), 93 to 124 (STGGPSSGGAYSNLPRLSTSSTHQPPDLSQIG), and 138 to 275 (QQLQ…NSNQ). The segment covering 13-34 (QAGQNESQNQSSGEAGEQNQEH) has biased composition (polar residues). A compositionally biased stretch (low complexity) spans 44-56 (QSQPASSQPQHQQ). Serine 61 bears the Phosphoserine mark. Polar residues predominate over residues 107–116 (PRLSTSSTHQ). Residues 136–158 (QQQQLQNQHRQQQQQQQQQSHQQ) are polyglutamine domain. Over residues 138–158 (QQLQNQHRQQQQQQQQQSHQQ) the composition is skewed to low complexity. Over residues 164–194 (PSFSTGLTGSSSQYQFLPRNDNTSQPPSKRN) the composition is skewed to polar residues. 2 stretches are compositionally biased toward low complexity: residues 206 to 222 (FEFFSMQQSQQPQFQPS) and 245 to 275 (SNGTNNSGNMNTNADYESFFNTGTNNSNSNQ). Phosphoserine is present on residues serine 286 and serine 325. The interval 326-415 (LSVNNKANGD…STDTTSNSRK (90 aa)) is disordered. Positions 359 to 390 (DSSNNNNNNNNNNNNENNNDNNNDNNDNSINS) are enriched in low complexity. Positions 362–386 (NNNNNNNNNNNNENNNDNNNDNNDN) are polyasparagine domain. Residues 391-412 (ATSTNIPNQEDHSLASTDTTSN) show a composition bias toward polar residues. 4 consecutive C2H2-type zinc fingers follow at residues 593–615 (HECPYCHRLFSQATHLEVHVRSH), 621–643 (FVCDYCGKRFTQGGNLRTHERLH), 649–671 (YSCDICDKKFSRKGNLAAHLVTH), and 677–702 (FVCKLENCNKTFTQLGNMKAHQNRFH). Disordered stretches follow at residues 743–812 (GIKG…SPTQ) and 853–877 (RLGSSSSSNTNNNNSNFSVGAAPGV). Residues 754–770 (KKSTISSPENHPASTIL) are compositionally biased toward polar residues. 3 stretches are compositionally biased toward low complexity: residues 771–782 (NPNTNANNAIAN), 796–809 (SSSNSNPGSHSMIS), and 856–868 (SSSSSNTNNNNSN).

It is found in the nucleus. The protein resides in the cytoplasm. Its subcellular location is the cytosol. In terms of biological role, transcription factor involved in the diauxic shift. In the presence of glucose, activates carbon and energy metabolism genes, and in te presence of glycerol-lactate, activates genes needed for cell wall maintenance. Binds to DNA elements with the sequence AAAAGAAA (A4GA3), a motif enriched in the promoters of AZF1-sensitive genes. Required for glucose induction of CLN3 transcription. Also required for proper FLO11 expression. May also function as a corepressor. Its function is as follows. As an intrinsically disordered protein, AZF1 is capable of forming the prion [AZF1+] that confers resistance to the drug radicicol in a gain-of-function manner but decreases the expression of AZF1's target genes. The protein is Transcription factor AZF1 of Saccharomyces cerevisiae (strain ATCC 204508 / S288c) (Baker's yeast).